The primary structure comprises 188 residues: ATP-dependent protease subunit HslV (188 aa).

Thr-8 is a catalytic residue. Ala-165, Cys-168, and Thr-171 together coordinate Na(+).

It belongs to the peptidase T1B family. HslV subfamily. As to quaternary structure, a double ring-shaped homohexamer of HslV is capped on each side by a ring-shaped HslU homohexamer. The assembly of the HslU/HslV complex is dependent on binding of ATP.

The protein localises to the cytoplasm. The catalysed reaction is ATP-dependent cleavage of peptide bonds with broad specificity.. Allosterically activated by HslU binding. Functionally, protease subunit of a proteasome-like degradation complex believed to be a general protein degrading machinery. The protein is ATP-dependent protease subunit HslV of Neorickettsia sennetsu (strain ATCC VR-367 / Miyayama) (Ehrlichia sennetsu).